Here is a 303-residue protein sequence, read N- to C-terminus: Probable aspartoacylase (303 aa).

Positions 13 and 16 each coordinate Zn(2+). Residues R55 and 62-63 (NR) each bind substrate. Residue H104 coordinates Zn(2+). Substrate-binding residues include E162 and Y273.

This sequence belongs to the AspA/AstE family. Aspartoacylase subfamily. Zn(2+) serves as cofactor.

The catalysed reaction is an N-acyl-L-aspartate + H2O = a carboxylate + L-aspartate. The polypeptide is Probable aspartoacylase (Parasynechococcus marenigrum (strain WH8102)).